Consider the following 430-residue polypeptide: MNFVEELRWRGMIHDIMPGTEEHLNKGMTSAYVGIDPTADSLHIGHLVGVMMLRHFQRAGHRPIALIGGATGMIGDPSMKSAERVLLDEATLRHNQDCIKQQLAKFLDFDSDAPNAAKLVNNYDWMKDYSFLGFIRDIGKHITVNYMMAKDSVKKRLSAESSTGLSFTEFSYQLLQGYDYLYLYRNEGCRLQMGGSDQWGNITTGTELIRRKDGGEAFALTCPLITKADGGKFGKTESGNIWLDPARTSPYAFYQFWLNVSDADAEKYIKIFTGLNQDEIAELATRQAEAPHLRPLQKRLAEEITVMVHSREAYDAAVEASEILFGKSTTEQLRKLDEATLLDVFAGVPQYHVERSRIATGISLVDLLADATDIFPSKGELRKTVKAGGVSLNKEKVADAEQTVGEDDLLSDRYLLAQKGKKSYYLIIVE.

Tyr-32 contributes to the L-tyrosine binding site. A 'HIGH' region motif is present at residues 37–46 (PTADSLHIGH). Tyr-172 and Gln-176 together coordinate L-tyrosine. Positions 232–236 (KFGKT) match the 'KMSKS' region motif. An ATP-binding site is contributed by Lys-235. Residues 362–430 (ISLVDLLADA…KKSYYLIIVE (69 aa)) enclose the S4 RNA-binding domain.

It belongs to the class-I aminoacyl-tRNA synthetase family. TyrS type 1 subfamily. In terms of assembly, homodimer.

It localises to the cytoplasm. The enzyme catalyses tRNA(Tyr) + L-tyrosine + ATP = L-tyrosyl-tRNA(Tyr) + AMP + diphosphate + H(+). Its function is as follows. Catalyzes the attachment of tyrosine to tRNA(Tyr) in a two-step reaction: tyrosine is first activated by ATP to form Tyr-AMP and then transferred to the acceptor end of tRNA(Tyr). This chain is Tyrosine--tRNA ligase, found in Porphyromonas gingivalis (strain ATCC 33277 / DSM 20709 / CIP 103683 / JCM 12257 / NCTC 11834 / 2561).